The sequence spans 187 residues: MAKRSSYAKEAEEKMKKTLEHFEDELKKVRTGRPTTAIFEDIKVDYYGMPTPINQVATLSVGEERTVVITPWDKKMLEPIEKAINSSNFGFHAINDGNVVRVSFPNPTIEERRKLVKAIKEMLEETKVALRNIRRDDIKKVKEIKNEGSISEDEAKKFEEEIQEILKENEDEAEKIFQRKEKEIMES.

Belongs to the RRF family.

It is found in the cytoplasm. Functionally, responsible for the release of ribosomes from messenger RNA at the termination of protein biosynthesis. May increase the efficiency of translation by recycling ribosomes from one round of translation to another. This chain is Ribosome-recycling factor, found in Petrotoga mobilis (strain DSM 10674 / SJ95).